Reading from the N-terminus, the 266-residue chain is Hydroxyethylthiazole kinase (266 aa).

Position 43 (Met43) interacts with substrate. Residues Arg119 and Thr166 each contribute to the ATP site. Substrate is bound at residue Gly193.

Belongs to the Thz kinase family. It depends on Mg(2+) as a cofactor.

It carries out the reaction 5-(2-hydroxyethyl)-4-methylthiazole + ATP = 4-methyl-5-(2-phosphooxyethyl)-thiazole + ADP + H(+). Its pathway is cofactor biosynthesis; thiamine diphosphate biosynthesis; 4-methyl-5-(2-phosphoethyl)-thiazole from 5-(2-hydroxyethyl)-4-methylthiazole: step 1/1. Its function is as follows. Catalyzes the phosphorylation of the hydroxyl group of 4-methyl-5-beta-hydroxyethylthiazole (THZ). The polypeptide is Hydroxyethylthiazole kinase (Methanococcus maripaludis (strain C6 / ATCC BAA-1332)).